Consider the following 405-residue polypeptide: Exodeoxyribonuclease 7 large subunit (405 aa).

Belongs to the XseA family. In terms of assembly, heterooligomer composed of large and small subunits.

Its subcellular location is the cytoplasm. The enzyme catalyses Exonucleolytic cleavage in either 5'- to 3'- or 3'- to 5'-direction to yield nucleoside 5'-phosphates.. Bidirectionally degrades single-stranded DNA into large acid-insoluble oligonucleotides, which are then degraded further into small acid-soluble oligonucleotides. This Halothermothrix orenii (strain H 168 / OCM 544 / DSM 9562) protein is Exodeoxyribonuclease 7 large subunit.